The chain runs to 275 residues: Tryptophan synthase alpha chain (275 aa).

Catalysis depends on proton acceptor residues E49 and D60.

It belongs to the TrpA family. As to quaternary structure, tetramer of two alpha and two beta chains.

The enzyme catalyses (1S,2R)-1-C-(indol-3-yl)glycerol 3-phosphate + L-serine = D-glyceraldehyde 3-phosphate + L-tryptophan + H2O. The protein operates within amino-acid biosynthesis; L-tryptophan biosynthesis; L-tryptophan from chorismate: step 5/5. In terms of biological role, the alpha subunit is responsible for the aldol cleavage of indoleglycerol phosphate to indole and glyceraldehyde 3-phosphate. In Psychrobacter sp. (strain PRwf-1), this protein is Tryptophan synthase alpha chain.